A 212-amino-acid polypeptide reads, in one-letter code: Probable nicotinate-nucleotide adenylyltransferase (212 aa).

It belongs to the NadD family.

It carries out the reaction nicotinate beta-D-ribonucleotide + ATP + H(+) = deamido-NAD(+) + diphosphate. The protein operates within cofactor biosynthesis; NAD(+) biosynthesis; deamido-NAD(+) from nicotinate D-ribonucleotide: step 1/1. Functionally, catalyzes the reversible adenylation of nicotinate mononucleotide (NaMN) to nicotinic acid adenine dinucleotide (NaAD). This chain is Probable nicotinate-nucleotide adenylyltransferase, found in Mycobacterium avium (strain 104).